The primary structure comprises 334 residues: Cathepsin J (334 aa).

An N-terminal signal peptide occupies residues 1–17 (MTPAVFLVILCFGVASG). A propeptide spans 18–113 (APARDPNLDA…PSAQKQVSIG (96 aa)) (activation peptide). Residue Cys-138 is part of the active site. 3 N-linked (GlcNAc...) asparagine glycosylation sites follow: Asn-217, Asn-221, and Asn-268. A disulfide bridge links Cys-269 with Cys-322. His-276 is a catalytic residue. Residue Asn-288 is glycosylated (N-linked (GlcNAc...) asparagine). The active site involves Asn-300.

Belongs to the peptidase C1 family. Expressed specifically in placenta.

It is found in the lysosome. This Rattus norvegicus (Rat) protein is Cathepsin J (Ctsj).